The following is a 70-amino-acid chain: DNA gyrase inhibitor YacG (70 aa).

Zn(2+) is bound by residues cysteine 7, cysteine 10, cysteine 26, and cysteine 30.

Belongs to the DNA gyrase inhibitor YacG family. Interacts with GyrB. Zn(2+) is required as a cofactor.

Inhibits all the catalytic activities of DNA gyrase by preventing its interaction with DNA. Acts by binding directly to the C-terminal domain of GyrB, which probably disrupts DNA binding by the gyrase. This is DNA gyrase inhibitor YacG from Shewanella sediminis (strain HAW-EB3).